Here is a 536-residue protein sequence, read N- to C-terminus: Lariat debranching enzyme (536 aa).

A divalent metal cation is bound by residues C8, H10, D39, and N84. The lariat recognition loop stretch occupies residues S124 to R154. A divalent metal cation contacts are provided by H174, H226, and H228. A disordered region spans residues E388–K536. Residues E414–N426 show a composition bias toward polar residues. Residues I430 to L441 show a composition bias toward acidic residues. The span at E484–L504 shows a compositional bias: basic and acidic residues.

Belongs to the lariat debranching enzyme family. Fe(2+) serves as cofactor. Requires Zn(2+) as cofactor. It depends on Mn(2+) as a cofactor.

The protein resides in the nucleus. Active in presence of diverse metals including Fe(2+), Zn(2+), Mn(2+). Also activated by Ca(2+). Binds two metal cations in two adjacent alpha and beta metal-binding pockets. Cleaves the 2'-5' phosphodiester linkage at the branch point of excised lariat intron RNA and converts them into linear molecules that can be subsequently degraded, thereby facilitating ribonucleotide turnover. Linked to its role in pre-mRNA processing mechanism, may also participate in retrovirus replication and have an antiviral cell-intrinsic defense function. This is Lariat debranching enzyme (DBR1) from Gallus gallus (Chicken).